Reading from the N-terminus, the 275-residue chain is Tryptophan synthase alpha chain (275 aa).

Residues Glu60 and Asp71 each act as proton acceptor in the active site.

The protein belongs to the TrpA family. Tetramer of two alpha and two beta chains.

It carries out the reaction (1S,2R)-1-C-(indol-3-yl)glycerol 3-phosphate + L-serine = D-glyceraldehyde 3-phosphate + L-tryptophan + H2O. It functions in the pathway amino-acid biosynthesis; L-tryptophan biosynthesis; L-tryptophan from chorismate: step 5/5. In terms of biological role, the alpha subunit is responsible for the aldol cleavage of indoleglycerol phosphate to indole and glyceraldehyde 3-phosphate. In Prochlorococcus marinus (strain MIT 9313), this protein is Tryptophan synthase alpha chain.